The sequence spans 129 residues: D-ribose pyranase (129 aa).

H20 acts as the Proton donor in catalysis. Substrate is bound by residues D28, H96, and 118 to 120 (YAN).

The protein belongs to the RbsD / FucU family. RbsD subfamily. As to quaternary structure, homodecamer.

The protein resides in the cytoplasm. The catalysed reaction is beta-D-ribopyranose = beta-D-ribofuranose. Its pathway is carbohydrate metabolism; D-ribose degradation; D-ribose 5-phosphate from beta-D-ribopyranose: step 1/2. Its function is as follows. Catalyzes the interconversion of beta-pyran and beta-furan forms of D-ribose. The chain is D-ribose pyranase from Staphylococcus haemolyticus (strain JCSC1435).